The chain runs to 368 residues: Glutamate 5-kinase (368 aa).

ATP is bound at residue Lys9. Residues Ser49, Asp136, and Asn148 each coordinate substrate. ATP is bound by residues 168-169 (TD) and 210-216 (TGGMMTK). One can recognise a PUA domain in the interval 275–353 (AGIITIDNGA…ADIENVLGYE (79 aa)).

The protein belongs to the glutamate 5-kinase family.

It localises to the cytoplasm. It carries out the reaction L-glutamate + ATP = L-glutamyl 5-phosphate + ADP. It participates in amino-acid biosynthesis; L-proline biosynthesis; L-glutamate 5-semialdehyde from L-glutamate: step 1/2. Catalyzes the transfer of a phosphate group to glutamate to form L-glutamate 5-phosphate. This chain is Glutamate 5-kinase, found in Haemophilus influenzae (strain PittGG).